Consider the following 376-residue polypeptide: Mitogen-activated protein kinase 2 (376 aa).

One can recognise a Protein kinase domain in the interval 32-319; it reads YVPIKPIGRG…VTEALQHPYM (288 aa). Residues 38–46 and lysine 61 each bind ATP; that span reads IGRGAYGVV. The active-site Proton acceptor is aspartate 158. Threonine 191 carries the phosphothreonine modification. The short motif at 191–193 is the TXY element; it reads TEY. Tyrosine 193 is subject to Phosphotyrosine. Threonine 196 carries the phosphothreonine modification.

Belongs to the protein kinase superfamily. CMGC Ser/Thr protein kinase family. MAP kinase subfamily. As to quaternary structure, interacts with MKK3. Dually phosphorylated on Thr-191 and Tyr-193, which activates the enzyme. Phosphorylated on Ser residue. Highest levels in the stem. Present in the leaf, root and flower, but not in seeds.

It catalyses the reaction L-seryl-[protein] + ATP = O-phospho-L-seryl-[protein] + ADP + H(+). It carries out the reaction L-threonyl-[protein] + ATP = O-phospho-L-threonyl-[protein] + ADP + H(+). Activated by threonine and tyrosine phosphorylation. The sequence is that of Mitogen-activated protein kinase 2 (MPK2) from Arabidopsis thaliana (Mouse-ear cress).